A 33-amino-acid chain; its full sequence is Large ribosomal subunit protein eL21 (33 aa).

It belongs to the eukaryotic ribosomal protein eL21 family. Component of the large ribosomal subunit.

It localises to the cytoplasm. The protein localises to the cytosol. It is found in the endoplasmic reticulum. Functionally, component of the large ribosomal subunit. The ribosome is a large ribonucleoprotein complex responsible for the synthesis of proteins in the cell. The chain is Large ribosomal subunit protein eL21 (rpl21) from Xenopus laevis (African clawed frog).